A 181-amino-acid polypeptide reads, in one-letter code: Large ribosomal subunit protein uL6m (181 aa).

This sequence belongs to the universal ribosomal protein uL6 family.

Its subcellular location is the mitochondrion. This Acanthamoeba castellanii (Amoeba) protein is Large ribosomal subunit protein uL6m (RPL6).